Consider the following 231-residue polypeptide: 2,3-bisphosphoglycerate-dependent phosphoglycerate mutase (231 aa).

Residues 10–17, 23–24, arginine 62, 89–92, lysine 100, 116–117, and 185–186 contribute to the substrate site; these read RHGQSEWN, TG, ERHY, RR, and GN. Histidine 11 serves as the catalytic Tele-phosphohistidine intermediate. The active-site Proton donor/acceptor is the glutamate 89.

This sequence belongs to the phosphoglycerate mutase family. BPG-dependent PGAM subfamily. In terms of assembly, homodimer.

The enzyme catalyses (2R)-2-phosphoglycerate = (2R)-3-phosphoglycerate. It participates in carbohydrate degradation; glycolysis; pyruvate from D-glyceraldehyde 3-phosphate: step 3/5. Functionally, catalyzes the interconversion of 2-phosphoglycerate and 3-phosphoglycerate. The sequence is that of 2,3-bisphosphoglycerate-dependent phosphoglycerate mutase from Buchnera aphidicola subsp. Acyrthosiphon pisum (strain APS) (Acyrthosiphon pisum symbiotic bacterium).